A 478-amino-acid polypeptide reads, in one-letter code: NADH-quinone oxidoreductase subunit N 1 (478 aa).

The next 14 helical transmembrane spans lie at 6 to 26 (TVLPILFLAIAGMIMLMSGVF), 33 to 53 (FAITAASIVVLAIAARLLVAA), 71 to 91 (FADVLVALGAIGALALSVTFN), 99 to 119 (FEFPVLVLFAVTGMVVLVSAS), 121 to 141 (LITLYIGFEIQSLALYVLAAF), 156 to 176 (FVLGALSSGLLLYGISLVYGF), 193 to 212 (PTAAVGSTIGLVFVLVGLAF), 244 to 264 (IAVFALLLRVMLGPFGPVLGQ), 265 to 285 (WRDLVQIIAAASMVIGAIGAI), 299 to 319 (IGHMGYALMGLAAGTAAGVSG), 321 to 341 (LIYLAIYLVMSLGTFGCIIAM), 364 to 384 (FAFVLAVMMWSMAGIPPLAGF), 388 to 408 (FYVFAAAINAGLGPLAVLGII), and 438 to 458 (AGVSLVMGAAAAFTVLFVFHP).

This sequence belongs to the complex I subunit 2 family. In terms of assembly, NDH-1 is composed of 14 different subunits. Subunits NuoA, H, J, K, L, M, N constitute the membrane sector of the complex.

It localises to the cell inner membrane. The catalysed reaction is a quinone + NADH + 5 H(+)(in) = a quinol + NAD(+) + 4 H(+)(out). Its function is as follows. NDH-1 shuttles electrons from NADH, via FMN and iron-sulfur (Fe-S) centers, to quinones in the respiratory chain. The immediate electron acceptor for the enzyme in this species is believed to be ubiquinone. Couples the redox reaction to proton translocation (for every two electrons transferred, four hydrogen ions are translocated across the cytoplasmic membrane), and thus conserves the redox energy in a proton gradient. The polypeptide is NADH-quinone oxidoreductase subunit N 1 (Acidiphilium cryptum (strain JF-5)).